The sequence spans 964 residues: Pumilio homolog 3 (964 aa).

The disordered stretch occupies residues 1–22 (MMIPELGRRPMHRGNEDSSFGD). The residue at position 192 (Ser192) is a Phosphoserine. Disordered stretches follow at residues 204-235 (PVVQ…ASQG), 256-300 (GTPD…TSGL), and 343-388 (DGHN…VANP). 2 stretches are compositionally biased toward polar residues: residues 207–216 (QQPSRPASRN) and 223–234 (DSNNNLSPSASQ). Thr257 bears the Phosphothreonine mark. 2 stretches are compositionally biased toward polar residues: residues 287 to 300 (TSNQ…TSGL) and 356 to 384 (RSDQ…SGSG). Residues 606-946 (FGSSMLEEFK…HIVARVEKLV (341 aa)) form the PUM-HD domain. Pumilio repeat units lie at residues 626–661 (EIAG…MVYE), 662–697 (EIMP…ELGE), 698–733 (KLID…QMVK), 734–769 (ELDG…FIIS), 770–806 (TFFG…KVME), 807–842 (EILS…VIIK), 843–878 (ELAG…LLVN), and 879–920 (EMLG…LILT).

Its subcellular location is the cytoplasm. Its function is as follows. Sequence-specific RNA-binding protein that regulates translation and mRNA stability by binding the 3'-UTR of target mRNAs. Binds the APUM-binding elements (APBEs) in the 3'-UTR mRNA sequence of CLV1, PNH, WUS and FAS2. This Arabidopsis thaliana (Mouse-ear cress) protein is Pumilio homolog 3 (APUM3).